Consider the following 147-residue polypeptide: D-aminoacyl-tRNA deacylase (147 aa).

The Gly-cisPro motif, important for rejection of L-amino acids signature appears at 137–138 (GP).

The protein belongs to the DTD family. Homodimer.

The protein localises to the cytoplasm. It carries out the reaction glycyl-tRNA(Ala) + H2O = tRNA(Ala) + glycine + H(+). The catalysed reaction is a D-aminoacyl-tRNA + H2O = a tRNA + a D-alpha-amino acid + H(+). In terms of biological role, an aminoacyl-tRNA editing enzyme that deacylates mischarged D-aminoacyl-tRNAs. Also deacylates mischarged glycyl-tRNA(Ala), protecting cells against glycine mischarging by AlaRS. Acts via tRNA-based rather than protein-based catalysis; rejects L-amino acids rather than detecting D-amino acids in the active site. By recycling D-aminoacyl-tRNA to D-amino acids and free tRNA molecules, this enzyme counteracts the toxicity associated with the formation of D-aminoacyl-tRNA entities in vivo and helps enforce protein L-homochirality. The protein is D-aminoacyl-tRNA deacylase of Acinetobacter baumannii (strain AYE).